Here is a 512-residue protein sequence, read N- to C-terminus: 2,3-bisphosphoglycerate-independent phosphoglycerate mutase (512 aa).

Residues Asp-11 and Ser-61 each coordinate Mn(2+). The active-site Phosphoserine intermediate is Ser-61. Substrate-binding positions include His-122, 152–153 (RD), Arg-184, Arg-190, 259–262 (RADR), and Lys-332. Mn(2+)-binding residues include Asp-399, His-403, Asp-440, His-441, and His-459.

Belongs to the BPG-independent phosphoglycerate mutase family. In terms of assembly, monomer. It depends on Mn(2+) as a cofactor.

The catalysed reaction is (2R)-2-phosphoglycerate = (2R)-3-phosphoglycerate. The protein operates within carbohydrate degradation; glycolysis; pyruvate from D-glyceraldehyde 3-phosphate: step 3/5. In terms of biological role, catalyzes the interconversion of 2-phosphoglycerate and 3-phosphoglycerate. The chain is 2,3-bisphosphoglycerate-independent phosphoglycerate mutase from Francisella tularensis subsp. holarctica (strain FTNF002-00 / FTA).